The chain runs to 615 residues: Medium-chain acyl-CoA ligase ACSF2, mitochondrial (615 aa).

A mitochondrion-targeting transit peptide spans 1 to 41 (MAVYHGMLRFGRLCIASLGARGPRTLLSRPRPNSKLQSVRA). Lys179 carries the N6-acetyllysine modification. Lys182 bears the N6-acetyllysine; alternate mark. Position 182 is an N6-succinyllysine; alternate (Lys182). Lys199 carries the post-translational modification N6-acetyllysine. 263 to 271 (TSGTTGNPK) contributes to the ATP binding site. An N6-acetyllysine mark is found at Lys340 and Lys398. Residue Lys478 is modified to N6-succinyllysine. Residues Asp493 and Arg508 each coordinate ATP. Residue Lys510 is modified to N6-acetyllysine. N6-acetyllysine; alternate occurs at positions 544 and 570. Residues Lys544 and Lys570 each carry the N6-succinyllysine; alternate modification. Lys599 is a binding site for ATP. Lys599 is modified (N6-succinyllysine).

This sequence belongs to the ATP-dependent AMP-binding enzyme family.

The protein localises to the mitochondrion. The catalysed reaction is a medium-chain fatty acid + ATP + CoA = a medium-chain fatty acyl-CoA + AMP + diphosphate. The enzyme catalyses octanoate + ATP + CoA = octanoyl-CoA + AMP + diphosphate. Its function is as follows. Acyl-CoA synthases catalyze the initial reaction in fatty acid metabolism, by forming a thioester with CoA. Has some preference toward medium-chain substrates. Plays a role in adipocyte differentiation. The protein is Medium-chain acyl-CoA ligase ACSF2, mitochondrial of Mus musculus (Mouse).